The chain runs to 301 residues: Cardiolipin synthase (CMP-forming) (301 aa).

Positions 70–93 (SGAGKAAPRPAAGAGAAAEAPGGQ) are disordered. A compositionally biased stretch (low complexity) spans 71-93 (GAGKAAPRPAAGAGAAAEAPGGQ). 5 helical membrane-spanning segments follow: residues 109–129 (IPNM…YLII), 133–153 (FNIA…DGFI), 190–212 (IPVP…VFYV), 250–270 (LILV…SIYL), and 272–292 (ILWC…YHYG).

The protein belongs to the CDP-alcohol phosphatidyltransferase class-I family. A divalent metal cation is required as a cofactor. In terms of tissue distribution, highly expressed in tissues such as heart, skeletal muscle and liver.

Its subcellular location is the mitochondrion inner membrane. It catalyses the reaction a CDP-1,2-diacyl-sn-glycerol + a 1,2-diacyl-sn-glycero-3-phospho-(1'-sn-glycerol) = a cardiolipin + CMP + H(+). Catalyzes the synthesis of cardiolipin (CL) (diphosphatidylglycerol) by specifically transferring a phosphatidyl group from CDP-diacylglycerol to phosphatidylglycerol (PG). CL is a key phospholipid in mitochondrial membranes and plays important roles in maintaining the functional integrity and dynamics of mitochondria under both optimal and stress conditions. The protein is Cardiolipin synthase (CMP-forming) (CRLS1) of Homo sapiens (Human).